The chain runs to 636 residues: Serine/threonine-protein kinase hal4 (636 aa).

Residues 1–11 (MGEKDKLHEIS) are compositionally biased toward basic and acidic residues. Disordered stretches follow at residues 1 to 167 (MGEK…AGVV) and 181 to 261 (AASP…PSSA). Pro residues predominate over residues 33 to 45 (EPPPPSSQQPPST). Polar residues-rich tracts occupy residues 56-92 (ALKQ…QQPL) and 113-124 (NPSRHVSSTSNK). A compositionally biased stretch (low complexity) spans 140 to 155 (PSGSVPPSASVSRANS). Residues 182-226 (ASPNPSTPSNGPAPVSTTATPSRNPVTRLQRIFSQNSVSRQNSRT) show a composition bias toward polar residues. Ser218 is subject to Phosphoserine. Residues 234–261 (NTEETNSTGGSETGGAANSSSTSNPSSA) are compositionally biased toward low complexity. Thr238 and Thr241 each carry phosphothreonine. Ser299 carries the phosphoserine modification. A Protein kinase domain is found at 351 to 623 (GRCQEVIGRG…AKQIMKSEWV (273 aa)). Residues 357-365 (IGRGAFGVV) and Lys385 each bind ATP. Asp481 (proton acceptor) is an active-site residue.

Belongs to the protein kinase superfamily. Ser/Thr protein kinase family. Interacts with sty1.

It localises to the cytoplasm. The enzyme catalyses L-seryl-[protein] + ATP = O-phospho-L-seryl-[protein] + ADP + H(+). It carries out the reaction L-threonyl-[protein] + ATP = O-phospho-L-threonyl-[protein] + ADP + H(+). Promotes K(+) uptake, by the potassium transporter trk1-trk2, which leads to the subsequent cellular resistance to toxic cations such as Na(+), Li(+) and Ca(2+). This chain is Serine/threonine-protein kinase hal4 (hal4), found in Schizosaccharomyces pombe (strain 972 / ATCC 24843) (Fission yeast).